The chain runs to 166 residues: Signal peptidase complex catalytic subunit SEC11 (166 aa).

Topologically, residues 1–9 are cytoplasmic; it reads MNIRQQLTQ. A helical; Signal-anchor for type II membrane protein membrane pass occupies residues 10-30; the sequence is FLSLAYVFTSAFVIWKSLGII. The Lumenal segment spans residues 31–166; sequence TNSHSPIVVV…MCISTLLTNE (136 aa). Residues S44, H83, and D108 each act as charge relay system in the active site. The interval 152 to 163 is C-terminal short (CTS) helix; the sequence is GMLGLMCISTLL.

This sequence belongs to the peptidase S26B family. As to quaternary structure, component of the signal peptidase complex (SPC) composed of a catalytic subunit SEC11 and three accessory subunits SPC1, SPC2 and SPC3. The complex induces a local thinning of the ER membrane which is used to measure the length of the signal peptide (SP) h-region of protein substrates. This ensures the selectivity of the complex towards h-regions shorter than 18-20 amino acids. SPC associates with the translocon complex.

Its subcellular location is the endoplasmic reticulum membrane. It carries out the reaction Cleavage of hydrophobic, N-terminal signal or leader sequences from secreted and periplasmic proteins.. Functionally, catalytic component of the signal peptidase complex (SPC) which catalyzes the cleavage of N-terminal signal sequences from nascent proteins as they are translocated into the lumen of the endoplasmic reticulum. Specifically cleaves N-terminal signal peptides that contain a hydrophobic alpha-helix (h-region) shorter than 18-20 amino acids. The chain is Signal peptidase complex catalytic subunit SEC11 (SEC11) from Scheffersomyces stipitis (strain ATCC 58785 / CBS 6054 / NBRC 10063 / NRRL Y-11545) (Yeast).